The primary structure comprises 367 residues: UDP-N-acetylglucosamine--N-acetylmuramyl-(pentapeptide) pyrophosphoryl-undecaprenol N-acetylglucosamine transferase (367 aa).

UDP-N-acetyl-alpha-D-glucosamine is bound by residues 13 to 15 (TGG), Asn-127, Arg-168, Ser-200, Ile-251, and Gln-296.

Belongs to the glycosyltransferase 28 family. MurG subfamily.

It is found in the cell inner membrane. It catalyses the reaction di-trans,octa-cis-undecaprenyl diphospho-N-acetyl-alpha-D-muramoyl-L-alanyl-D-glutamyl-meso-2,6-diaminopimeloyl-D-alanyl-D-alanine + UDP-N-acetyl-alpha-D-glucosamine = di-trans,octa-cis-undecaprenyl diphospho-[N-acetyl-alpha-D-glucosaminyl-(1-&gt;4)]-N-acetyl-alpha-D-muramoyl-L-alanyl-D-glutamyl-meso-2,6-diaminopimeloyl-D-alanyl-D-alanine + UDP + H(+). It participates in cell wall biogenesis; peptidoglycan biosynthesis. Cell wall formation. Catalyzes the transfer of a GlcNAc subunit on undecaprenyl-pyrophosphoryl-MurNAc-pentapeptide (lipid intermediate I) to form undecaprenyl-pyrophosphoryl-MurNAc-(pentapeptide)GlcNAc (lipid intermediate II). This is UDP-N-acetylglucosamine--N-acetylmuramyl-(pentapeptide) pyrophosphoryl-undecaprenol N-acetylglucosamine transferase from Flavobacterium psychrophilum (strain ATCC 49511 / DSM 21280 / CIP 103535 / JIP02/86).